A 621-amino-acid chain; its full sequence is Na(+)/H(+) antiporter NhaA (621 aa).

Residues 1–430 (MPASSFGESS…LGWLIFKVAA (430 aa)) are na(+)/H(+) antiporter NhaA. 11 consecutive transmembrane segments (helical) span residues 27–47 (GAAVLLVIVTVVALVWANSPL), 72–92 (LHHWVNDGLMVVFFFLIGLEV), 109–129 (LALIAGVTGVVLPALVYVLIV), 139–159 (GWGAVVGTDTAFMLGTLAIVG), 168–188 (VFLLTLTVVDDFLAVSIIGIV), 192–212 (EIRIVPLLIALASLVGLWLLG), 223–243 (VLIVIVLWFATVYSGIHASLA), 300–320 (FLRLPTALLIVPIFALANAGV), 339–359 (VIAGLVLGKLLGIGLTTLVAV), 375–395 (VFGGAALSGIGFTVSLLIIGL), and 409–429 (VGVLVSMVFATLLGWLIFKVA). In terms of domain architecture, Thioredoxin spans 431–578 (QRWGEKTADL…VERDLASAVA (148 aa)).

The protein in the N-terminal section; belongs to the NhaA Na(+)/H(+) (TC 2.A.33) antiporter family.

It is found in the cell inner membrane. The catalysed reaction is Na(+)(in) + 2 H(+)(out) = Na(+)(out) + 2 H(+)(in). Its function is as follows. Na(+)/H(+) antiporter that extrudes sodium in exchange for external protons. This is Na(+)/H(+) antiporter NhaA from Herminiimonas arsenicoxydans.